Reading from the N-terminus, the 70-residue chain is Large ribosomal subunit protein bL31 (70 aa).

Residues C16, C18, C37, and C40 each coordinate Zn(2+).

This sequence belongs to the bacterial ribosomal protein bL31 family. Type A subfamily. As to quaternary structure, part of the 50S ribosomal subunit. Requires Zn(2+) as cofactor.

Binds the 23S rRNA. This chain is Large ribosomal subunit protein bL31, found in Shewanella sp. (strain MR-4).